The following is a 281-amino-acid chain: Phosphatidylglycerol--prolipoprotein diacylglyceryl transferase (281 aa).

7 consecutive transmembrane segments (helical) span residues 11–31 (IIFT…VISF), 57–77 (LLYA…IIFY), 89–109 (VFYI…AIIV), 121–141 (ILEI…AGRI), 194–214 (PTQL…IYFF), 222–242 (GSIS…IEFF), and 255–275 (IITM…IIMY). Arg-140 lines the a 1,2-diacyl-sn-glycero-3-phospho-(1'-sn-glycerol) pocket.

It belongs to the Lgt family.

It is found in the cell inner membrane. The enzyme catalyses L-cysteinyl-[prolipoprotein] + a 1,2-diacyl-sn-glycero-3-phospho-(1'-sn-glycerol) = an S-1,2-diacyl-sn-glyceryl-L-cysteinyl-[prolipoprotein] + sn-glycerol 1-phosphate + H(+). Its pathway is protein modification; lipoprotein biosynthesis (diacylglyceryl transfer). Functionally, catalyzes the transfer of the diacylglyceryl group from phosphatidylglycerol to the sulfhydryl group of the N-terminal cysteine of a prolipoprotein, the first step in the formation of mature lipoproteins. This is Phosphatidylglycerol--prolipoprotein diacylglyceryl transferase from Buchnera aphidicola subsp. Acyrthosiphon pisum (strain Tuc7).